A 1490-amino-acid chain; its full sequence is Leucine-rich repeat-containing protein 7 (1490 aa).

LRR repeat units follow at residues 23–44 (IISVLDYSHCSLQQVPKEVFNF), 47–68 (TLEELYLDANQIEELPKQLFNC), 70–91 (ALRKLSIPDNDLSSLPTSIASL), 93–114 (NLKELDISKNGVQEFPENIKCC), 116–137 (CLTIIEASVNPISKLPDGFTQL), 139–161 (NLTQLYLNDAFLEFLPANFGRLV), 162–183 (KLRILELRENHLKTLPKSMHKL), 185–206 (QLERLDLGNNEFSELPEVLDQI), 208–229 (NLRELWMDNNALQVLPGSIGKL), 231–253 (MLVYLDMSKNRIETVDMDISGCE), 254–275 (ALEDLLLSSNMLQQLPDSIGLL), 277–298 (KLTTLKVDDNQLTMLPNTIGNL), 300–321 (LLEEFDCSCNELESLPPTIGYL), 323–344 (SLRTLAVDENFLPELPREIGSC), 346–367 (NVTVMSLRSNKLEFLPEEIGQM), 369–391 (RLRVLNLSDNRLKNLPFSFTKLK), and 392–413 (ELAALWLSDNQSKALIPLQTEA). Phosphoserine occurs at positions 439, 441, and 443. The segment covering 663–676 (KKESTDESEVDKTH) has biased composition (basic and acidic residues). 3 disordered regions span residues 663-704 (KKES…NTRM), 785-807 (AGENANNNPLLSSKARSVPAHGR), and 822-899 (ELEQ…YHDP). Residues 677–686 (CLNNSVSSGT) are compositionally biased toward polar residues. A compositionally biased stretch (low complexity) spans 687-700 (YSDYSPSQASSASS). At T831 the chain carries Phosphothreonine. Phosphoserine is present on S850. A compositionally biased stretch (low complexity) spans 859-871 (PSKLETTPTTSPL). T865 carries the phosphothreonine modification. S869 is subject to Phosphoserine. Residues 872–882 (PERKDHMKEPT) are compositionally biased toward basic and acidic residues. Residues S947, S949, and S1118 each carry the phosphoserine modification. The span at 1134 to 1144 (PHELPPGDRYG) shows a compositional bias: basic and acidic residues. Disordered regions lie at residues 1134–1158 (PHELPPGDRYGRATYRGGLEGQSSI) and 1196–1218 (QRRPLSARSYSTESYGASQTRPV). Omega-N-methylarginine is present on R1149. Residues 1196 to 1217 (QRRPLSARSYSTESYGASQTRP) show a composition bias toward polar residues. S1233 is subject to Phosphoserine. 2 disordered regions span residues 1238–1265 (GNYGDKTSDNSDIKTRPTPVKGEESCGK) and 1282–1312 (RLDRTPSQQSNILDNGQEDVSPSGQWNPYPL). Residues 1243–1263 (KTSDNSDIKTRPTPVKGEESC) are compositionally biased toward basic and acidic residues. The span at 1286 to 1307 (TPSQQSNILDNGQEDVSPSGQW) shows a compositional bias: polar residues. Residues S1288 and S1392 each carry the phosphoserine modification. The PDZ domain occupies 1398 to 1488 (EQFCVRIEKN…TVDLVIQREL (91 aa)).

Belongs to the LAP (LRR and PDZ) protein family. Interacts with CNKSR2 and DLG4. Interacts with CTNND2/Catenin delta-2. Forms a complex with N-cadherin through CTNND2. Interacts with CAMK2A. In terms of tissue distribution, expressed in brain (at protein level).

Its subcellular location is the cytoplasm. The protein resides in the postsynaptic density. In terms of biological role, required for normal synaptic spine architecture and function. Necessary for DISC1 and GRM5 localization to postsynaptic density complexes and for both N-methyl D-aspartate receptor-dependent and metabotropic glutamate receptor-dependent long term depression. The protein is Leucine-rich repeat-containing protein 7 (Lrrc7) of Mus musculus (Mouse).